The following is a 312-amino-acid chain: Methionyl-tRNA formyltransferase (312 aa).

110–113 is a (6S)-5,6,7,8-tetrahydrofolate binding site; sequence SLLP.

This sequence belongs to the Fmt family.

It carries out the reaction L-methionyl-tRNA(fMet) + (6R)-10-formyltetrahydrofolate = N-formyl-L-methionyl-tRNA(fMet) + (6S)-5,6,7,8-tetrahydrofolate + H(+). Functionally, attaches a formyl group to the free amino group of methionyl-tRNA(fMet). The formyl group appears to play a dual role in the initiator identity of N-formylmethionyl-tRNA by promoting its recognition by IF2 and preventing the misappropriation of this tRNA by the elongation apparatus. In Streptococcus suis (strain 05ZYH33), this protein is Methionyl-tRNA formyltransferase.